Reading from the N-terminus, the 262-residue chain is Small ribosomal subunit protein uS2 (262 aa).

The segment at 225–262 (KQGEQLTEEAKPEDKEDEKGQAEEKEVKEENNSANKEE) is disordered. Positions 232 to 262 (EEAKPEDKEDEKGQAEEKEVKEENNSANKEE) are enriched in basic and acidic residues.

The protein belongs to the universal ribosomal protein uS2 family.

This chain is Small ribosomal subunit protein uS2, found in Halothermothrix orenii (strain H 168 / OCM 544 / DSM 9562).